The primary structure comprises 442 residues: F-box/kelch-repeat protein OR23 (442 aa).

In terms of domain architecture, F-box spans Thr37–Ser84. Kelch repeat units lie at residues Leu93 to Ala139, Tyr145 to Gly200, Arg204 to Asn257, Glu269 to Ala328, Asp330 to Gly377, and Leu390 to Met437.

The protein is F-box/kelch-repeat protein OR23 (OR23) of Arabidopsis thaliana (Mouse-ear cress).